Reading from the N-terminus, the 138-residue chain is Sporulation-specific cell division protein SsgB (138 aa).

This sequence belongs to the SsgA family. In terms of assembly, monomer. Interacts with SsgA. Interacts with FtsZ (via N-terminus).

It localises to the cell septum. Its function is as follows. Involved in sporulation-specific cell division. Required for early stages of sporulation. Important in the process of growth cessation prior to sporulation-specific cell division. Recruits cell division protein FtsZ to the future septum sites and tethers the contractile ring structure (Z ring) to the cytoplasmic membrane during sporulation. Stimulates polymerization and filament length of FtsZ in vitro. In Thermobifida fusca (strain YX), this protein is Sporulation-specific cell division protein SsgB.